A 291-amino-acid polypeptide reads, in one-letter code: 2-C-methyl-D-erythritol 4-phosphate cytidylyltransferase (291 aa).

The interval 1-23 is disordered; the sequence is MTERDFDTPVETPTVQPAPAQGA.

It belongs to the IspD/TarI cytidylyltransferase family. IspD subfamily.

It carries out the reaction 2-C-methyl-D-erythritol 4-phosphate + CTP + H(+) = 4-CDP-2-C-methyl-D-erythritol + diphosphate. It participates in isoprenoid biosynthesis; isopentenyl diphosphate biosynthesis via DXP pathway; isopentenyl diphosphate from 1-deoxy-D-xylulose 5-phosphate: step 2/6. Its function is as follows. Catalyzes the formation of 4-diphosphocytidyl-2-C-methyl-D-erythritol from CTP and 2-C-methyl-D-erythritol 4-phosphate (MEP). This Bifidobacterium longum (strain DJO10A) protein is 2-C-methyl-D-erythritol 4-phosphate cytidylyltransferase.